The primary structure comprises 70 residues: Small ribosomal subunit protein bS21 (70 aa).

It belongs to the bacterial ribosomal protein bS21 family.

The chain is Small ribosomal subunit protein bS21 from Neisseria gonorrhoeae (strain ATCC 700825 / FA 1090).